A 257-amino-acid chain; its full sequence is NAD kinase (257 aa).

The Proton acceptor role is filled by D46. NAD(+) contacts are provided by residues 46–47 (DG), 116–117 (NE), D146, A154, 157–162 (TAYNLS), and N218.

The protein belongs to the NAD kinase family. A divalent metal cation is required as a cofactor.

Its subcellular location is the cytoplasm. It catalyses the reaction NAD(+) + ATP = ADP + NADP(+) + H(+). In terms of biological role, involved in the regulation of the intracellular balance of NAD and NADP, and is a key enzyme in the biosynthesis of NADP. Catalyzes specifically the phosphorylation on 2'-hydroxyl of the adenosine moiety of NAD to yield NADP. In Brucella melitensis biotype 1 (strain ATCC 23456 / CCUG 17765 / NCTC 10094 / 16M), this protein is NAD kinase.